The primary structure comprises 289 residues: UDP-3-O-acyl-N-acetylglucosamine deacetylase (289 aa).

Zn(2+) contacts are provided by His79, His236, and Asp240. The Proton donor role is filled by His263.

Belongs to the LpxC family. Zn(2+) serves as cofactor.

It catalyses the reaction a UDP-3-O-[(3R)-3-hydroxyacyl]-N-acetyl-alpha-D-glucosamine + H2O = a UDP-3-O-[(3R)-3-hydroxyacyl]-alpha-D-glucosamine + acetate. It participates in glycolipid biosynthesis; lipid IV(A) biosynthesis; lipid IV(A) from (3R)-3-hydroxytetradecanoyl-[acyl-carrier-protein] and UDP-N-acetyl-alpha-D-glucosamine: step 2/6. In terms of biological role, catalyzes the hydrolysis of UDP-3-O-myristoyl-N-acetylglucosamine to form UDP-3-O-myristoylglucosamine and acetate, the committed step in lipid A biosynthesis. This chain is UDP-3-O-acyl-N-acetylglucosamine deacetylase, found in Rickettsia typhi (strain ATCC VR-144 / Wilmington).